Consider the following 983-residue polypeptide: Chaperone protein ClpB3, mitochondrial (983 aa).

The transit peptide at methionine 1–tyrosine 87 directs the protein to the mitochondrion. Residues proline 97–serine 240 enclose the Clp R domain. 2 repeat regions span residues phenylalanine 100–glutamine 165 and isoleucine 177–serine 240. The segment at leucine 255–proline 503 is i. Glycine 300–threonine 307 is a binding site for ATP. Positions isoleucine 504–glutamate 627 form a coiled coil. Positions valine 629–serine 820 are II. Glycine 703–threonine 710 provides a ligand contact to ATP.

Belongs to the ClpA/ClpB family.

The protein localises to the mitochondrion. In terms of biological role, molecular chaperone that may not be involved in heat stress response or tolerance. This Oryza sativa subsp. japonica (Rice) protein is Chaperone protein ClpB3, mitochondrial (CLPB3).